The following is a 128-amino-acid chain: Large ribosomal subunit protein bL19 (128 aa).

This sequence belongs to the bacterial ribosomal protein bL19 family.

In terms of biological role, this protein is located at the 30S-50S ribosomal subunit interface and may play a role in the structure and function of the aminoacyl-tRNA binding site. The chain is Large ribosomal subunit protein bL19 from Ralstonia nicotianae (strain ATCC BAA-1114 / GMI1000) (Ralstonia solanacearum).